The primary structure comprises 202 residues: Glycerol-3-phosphate acyltransferase 1 (202 aa).

The next 5 helical transmembrane spans lie at alanine 8 to glycine 28, leucine 85 to leucine 105, isoleucine 122 to alanine 142, glutamine 146 to alanine 166, and alanine 173 to isoleucine 190.

The protein belongs to the PlsY family. As to quaternary structure, probably interacts with PlsX.

It localises to the cell membrane. It carries out the reaction an acyl phosphate + sn-glycerol 3-phosphate = a 1-acyl-sn-glycero-3-phosphate + phosphate. The protein operates within lipid metabolism; phospholipid metabolism. Functionally, catalyzes the transfer of an acyl group from acyl-phosphate (acyl-PO(4)) to glycerol-3-phosphate (G3P) to form lysophosphatidic acid (LPA). This enzyme utilizes acyl-phosphate as fatty acyl donor, but not acyl-CoA or acyl-ACP. The chain is Glycerol-3-phosphate acyltransferase 1 from Desulfitobacterium hafniense (strain Y51).